Here is a 313-residue protein sequence, read N- to C-terminus: Beta-ketoacyl-[acyl-carrier-protein] synthase III (313 aa).

Catalysis depends on residues C112 and H238. The ACP-binding stretch occupies residues 239 to 243; it reads QANIR. The active site involves N268.

This sequence belongs to the thiolase-like superfamily. FabH family. Homodimer.

It localises to the cytoplasm. It carries out the reaction malonyl-[ACP] + acetyl-CoA + H(+) = 3-oxobutanoyl-[ACP] + CO2 + CoA. It functions in the pathway lipid metabolism; fatty acid biosynthesis. In terms of biological role, catalyzes the condensation reaction of fatty acid synthesis by the addition to an acyl acceptor of two carbons from malonyl-ACP. Catalyzes the first condensation reaction which initiates fatty acid synthesis and may therefore play a role in governing the total rate of fatty acid production. Possesses both acetoacetyl-ACP synthase and acetyl transacylase activities. Its substrate specificity determines the biosynthesis of branched-chain and/or straight-chain of fatty acids. In Staphylococcus epidermidis (strain ATCC 35984 / DSM 28319 / BCRC 17069 / CCUG 31568 / BM 3577 / RP62A), this protein is Beta-ketoacyl-[acyl-carrier-protein] synthase III.